The chain runs to 191 residues: Fe/S biogenesis protein NfuA (191 aa).

Residues cysteine 149 and cysteine 152 each contribute to the [4Fe-4S] cluster site.

The protein belongs to the NfuA family. As to quaternary structure, homodimer. Requires [4Fe-4S] cluster as cofactor.

Involved in iron-sulfur cluster biogenesis. Binds a 4Fe-4S cluster, can transfer this cluster to apoproteins, and thereby intervenes in the maturation of Fe/S proteins. Could also act as a scaffold/chaperone for damaged Fe/S proteins. The sequence is that of Fe/S biogenesis protein NfuA from Escherichia coli O7:K1 (strain IAI39 / ExPEC).